The sequence spans 302 residues: HPr kinase/phosphorylase (302 aa).

Active-site residues include H136 and K157. An ATP-binding site is contributed by 151–158 (GESGIGKS). S158 lines the Mg(2+) pocket. D175 acts as the Proton acceptor; for phosphorylation activity. Proton donor; for dephosphorylation activity in catalysis. The tract at residues 198–207 (LEVRGLGIID) is important for the catalytic mechanism of both phosphorylation and dephosphorylation. A Mg(2+)-binding site is contributed by E199. The active site involves R240. Residues 261–266 (PIRPGR) are important for the catalytic mechanism of dephosphorylation.

It belongs to the HPrK/P family. Homohexamer. Requires Mg(2+) as cofactor.

It carries out the reaction [HPr protein]-L-serine + ATP = [HPr protein]-O-phospho-L-serine + ADP + H(+). The enzyme catalyses [HPr protein]-O-phospho-L-serine + phosphate + H(+) = [HPr protein]-L-serine + diphosphate. Catalyzes the ATP- as well as the pyrophosphate-dependent phosphorylation of a specific serine residue in HPr, a phosphocarrier protein of the phosphoenolpyruvate-dependent sugar phosphotransferase system (PTS). HprK/P also catalyzes the pyrophosphate-producing, inorganic phosphate-dependent dephosphorylation (phosphorolysis) of seryl-phosphorylated HPr (P-Ser-HPr). The two antagonistic activities of HprK/P are regulated by several intracellular metabolites, which change their concentration in response to the absence or presence of rapidly metabolisable carbon sources (glucose, fructose, etc.) in the growth medium. Therefore, by controlling the phosphorylation state of HPr, HPrK/P is a sensor enzyme that plays a major role in the regulation of carbon metabolism and sugar transport: it mediates carbon catabolite repression (CCR), and regulates PTS-catalyzed carbohydrate uptake and inducer exclusion. The polypeptide is HPr kinase/phosphorylase (Clostridium beijerinckii (strain ATCC 51743 / NCIMB 8052) (Clostridium acetobutylicum)).